The following is a 208-amino-acid chain: Porimin (208 aa).

Positions Met1–Ala26 are cleaved as a signal peptide. The Extracellular portion of the chain corresponds to His27–Thr166. Residues Gly42–His57 are compositionally biased toward polar residues. Residues Gly42 to Thr125 are disordered. Asn46, Asn50, Asn64, Asn68, Asn83, Asn96, and Asn106 each carry an N-linked (GlcNAc...) asparagine glycan. The span at Glu65–Met107 shows a compositional bias: polar residues. Low complexity predominate over residues Thr108 to Ser122. Asn124 and Asn138 each carry an N-linked (GlcNAc...) asparagine glycan. A helical membrane pass occupies residues Gly167–Cys187. Residues Lys188–Ile208 are Cytoplasmic-facing.

Belongs to the CD164 family. As to expression, ubiquitous. Not expressed in ovary. Expressed in keratinocytes.

It is found in the membrane. Its function is as follows. Implicated in oncotic cell death, characterized by cell swelling, organelle swelling, vacuolization and increased membrane permeability. This Homo sapiens (Human) protein is Porimin (TMEM123).